The following is a 205-amino-acid chain: Small ribosomal subunit protein mS26 (205 aa).

The N-terminal 26 residues, 1 to 26, are a transit peptide targeting the mitochondrion; the sequence is MLRALSTLGARPLGRPPAQFLLLARG.

This sequence belongs to the mitochondrion-specific ribosomal protein mS26 family. Component of the mitochondrial ribosome small subunit (28S) which comprises a 12S rRNA and about 30 distinct proteins.

The protein resides in the mitochondrion. The chain is Small ribosomal subunit protein mS26 (MRPS26) from Bos taurus (Bovine).